Consider the following 558-residue polypeptide: MAGPLPPLNQEAAFQKLQEYYDSKGKDLNIKDLFVKDSKRFSKYSLRLHTQNDGEILLDYSKNRINDEVWDLLLTLAKVRRVNAARDAMFSGQHINITENRAVLHTALRNRGTDPVLVDDKDVMPDVRAELAHMKEFTNMVISGVWRGCTGKQITDVVNIGIGGSDLGPLMVTEALKPYGKGLHSHFVSNIDGTHLAEVLKKVNYETTLFIVASKTFTTQETITNATSAKTWLLEHSKEPESVAKHFVALSTNKEKVTEFGIDSTNMFGFWDWVGGRYSLWSAIGLSICLSIGFENFEQLLDGAHFMDNHFKTTPFEKNAPVILALLGVWYSNFFKAETHALLPYDQYLHRFAAYFQQGDMESNGKFVSKSGKPVKYSTGPIVWGEPGTNGQHAFYQLIHQGTRLIPCDFIAPAQTHNPIAGGKHHKILLSNFLAQTEALMAGKTVDEARTELSKAGLCGNELDNLLPHKVFVGNRPTNSIVVKKVSPFTLGALIALYEHKIFVQGIIWDINSFDQWGVELGKQLAKAIEPELDHCNEVSTHDSSTNGLINFIKANWK.

Glu362 serves as the catalytic Proton donor. Active-site residues include His393 and Lys523.

The protein belongs to the GPI family.

The protein resides in the cytoplasm. It carries out the reaction alpha-D-glucose 6-phosphate = beta-D-fructose 6-phosphate. The protein operates within carbohydrate degradation; glycolysis; D-glyceraldehyde 3-phosphate and glycerone phosphate from D-glucose: step 2/4. This Drosophila melanogaster (Fruit fly) protein is Glucose-6-phosphate isomerase (Pgi).